The sequence spans 121 residues: Phosphoribosyl-ATP pyrophosphatase (121 aa).

Belongs to the PRA-PH family.

It localises to the cytoplasm. It catalyses the reaction 1-(5-phospho-beta-D-ribosyl)-ATP + H2O = 1-(5-phospho-beta-D-ribosyl)-5'-AMP + diphosphate + H(+). It functions in the pathway amino-acid biosynthesis; L-histidine biosynthesis; L-histidine from 5-phospho-alpha-D-ribose 1-diphosphate: step 2/9. The sequence is that of Phosphoribosyl-ATP pyrophosphatase from Burkholderia ambifaria (strain MC40-6).